A 224-amino-acid chain; its full sequence is Claudin-19 (224 aa).

Residues 1-7 (MANSGLQ) are Cytoplasmic-facing. Residues 8–28 (LLGYFLALGGWVGIIASTALP) traverse the membrane as a helical segment. The Extracellular segment spans residues 29–81 (QWKQSSYAGDAIITAVGLYEGLWMSCASQSTGQVQCKLYDSLLALDGHIQSAR). A disulfide bond links Cys-54 and Cys-64. Residues 82-102 (ALMVVAVLLGFVAMVLSVVGM) form a helical membrane-spanning segment. Residues 103 to 117 (KCTRVGDSNPTAKGR) are Cytoplasmic-facing. Residues 118–138 (VAISGGALFLLAGLCTLTAVS) traverse the membrane as a helical segment. The Extracellular portion of the chain corresponds to 139–160 (WYATLVTQEFFNPSTPVNARYE). A helical membrane pass occupies residues 161–181 (FGPALFVGWASAGLAILGGSF). Residues 182-224 (LCCTCPEPERANSIPQPYRSGPSTAAREPVVKLSTSVKGPLGV) are Cytoplasmic-facing.

Belongs to the claudin family. As to quaternary structure, can form homo- and heteropolymeric tight junction strands. Interacts with other claudins including CLDN3, CLDN10, CLDN16 and CLDN18 with highest affinity for CLDN16. Interacts (via PDZ-binding motif TRV) with TJP1 (via PDZ domain).

Its subcellular location is the cell junction. The protein localises to the tight junction. The protein resides in the cell membrane. It catalyses the reaction Mg(2+)(in) = Mg(2+)(out). It carries out the reaction Ca(2+)(in) = Ca(2+)(out). The enzyme catalyses Na(+)(in) = Na(+)(out). The catalysed reaction is K(+)(in) = K(+)(out). It catalyses the reaction Rb(+)(in) = Rb(+)(out). It carries out the reaction Cs(+)(in) = Cs(+)(out). The enzyme catalyses Li(+)(in) = Li(+)(out). Functionally, forms paracellular channels: coassembles with CLDN16 into tight junction strands with cation-selective channels through the strands, conveying epithelial permeability in a process known as paracellular tight junction permeability. Involved in the maintenance of ion gradients along the nephron. In the thick ascending limb (TAL) of Henle's loop, facilitates sodium paracellular permeability from the interstitial compartment to the lumen, contributing to the lumen-positive transepithelial potential that drives paracellular magnesium and calcium reabsorption. Forms paracellular barriers on its own. In the peripheral nervous system, represents a major constituent of the tight junctions in Schwann cells and contributes to electrical sealing. During retinal neurogenesis, may regulate the barrier properties of tight junctions in retinal pigment epithelium, required for proper retinal tissue differentiation and vision. This is Claudin-19 from Rattus norvegicus (Rat).